The sequence spans 567 residues: PEX5-related protein (567 aa).

The interval 56 to 105 is disordered; it reads SEPVSQPQTKAKKSEPSSKSSSLKKKADGSDLISADAEQRAQALRGPETS. Position 146 is a phosphoserine (Ser-146). The interval 150-169 is disordered; that stretch reads LWSAEHRSQPELSTGKSALN. Phosphoserine is present on residues Ser-194, Ser-198, and Ser-202. 3 TPR repeats span residues 267–300, 301–334, and 336–368; these read WPGAFEEGLKRLKEGDLPVTILFMEAAILQDPGD, AEAWQFLGITQAENENEQAAIVALQRCLELQPNN, and KALMALAVSYTNTSHQQDACEALKNWIKQNPKY. A phosphoserine mark is found at Ser-386 and Ser-388. TPR repeat units lie at residues 415–448, 450–482, and 484–516; these read PDLQTGLGVLFHLSGEFNRAIDAFNAALTVRPED, SLWNRLGATLANGDRSEEAVEAYTRALEIQPGF, and RSRYNLGISCINLGAYREAVSNFLTALSLQRKS.

The protein belongs to the peroxisomal targeting signal receptor family. In terms of assembly, interacts with RAB8B. Forms an obligate 4:4 complex with HCN2. Interacts with HCN3. Interacts with HCN4 with a 4:4 HCN4:PEX5L stoichiometry; reduces the effects of cAMP on the voltage-dependence and rate of activation of HCN4.

Its subcellular location is the cytoplasm. It localises to the membrane. Functionally, accessory subunit of hyperpolarization-activated cyclic nucleotide-gated (HCN) channels, regulating their cell-surface expression and cyclic nucleotide dependence. The sequence is that of PEX5-related protein (Pex5l) from Mus musculus (Mouse).